A 197-amino-acid polypeptide reads, in one-letter code: uncharacterized protein (197 aa).

Residues 1–10 (MKNNYTSLKS) show a composition bias toward polar residues. Disordered stretches follow at residues 1–46 (MKNN…PPYS) and 54–73 (LVPEDSSTGPTETANPNVER). Residues 18 to 37 (LKTGHEIDLEKGPLPEHNSE) are compositionally biased toward basic and acidic residues. The segment covering 58–69 (DSSTGPTETANP) has biased composition (polar residues). 2 helical membrane passes run 83–105 (NIYSLLRLLIAVLAVSVVFFTAW) and 120–142 (AFFVLIGLTCLILLITMILEPGL).

This sequence belongs to the WTF family.

It is found in the endoplasmic reticulum membrane. This is an uncharacterized protein from Schizosaccharomyces pombe (strain 972 / ATCC 24843) (Fission yeast).